We begin with the raw amino-acid sequence, 204 residues long: NADH-ubiquinone oxidoreductase subunit 9 (204 aa).

It belongs to the complex I 30 kDa subunit family. Complex I is composed of about 30 different subunits.

The protein resides in the mitochondrion inner membrane. It carries out the reaction a ubiquinone + NADH + 5 H(+)(in) = a ubiquinol + NAD(+) + 4 H(+)(out). In terms of biological role, core subunit of the mitochondrial membrane respiratory chain NADH dehydrogenase (Complex I) that is believed to belong to the minimal assembly required for catalysis. Complex I functions in the transfer of electrons from NADH to the respiratory chain. The immediate electron acceptor for the enzyme is believed to be ubiquinone. This Reclinomonas americana protein is NADH-ubiquinone oxidoreductase subunit 9 (NAD9).